The primary structure comprises 339 residues: DNA-directed RNA polymerase subunit alpha (339 aa).

Positions 1-233 (MVREEVAGST…DLFLPFLHAE (233 aa)) are alpha N-terminal domain (alpha-NTD). An alpha C-terminal domain (alpha-CTD) region spans residues 264 to 339 (KKGIPLNCIF…IDLLKNKLSF (76 aa)).

The protein belongs to the RNA polymerase alpha chain family. In terms of assembly, in plastids the minimal PEP RNA polymerase catalytic core is composed of four subunits: alpha, beta, beta', and beta''. When a (nuclear-encoded) sigma factor is associated with the core the holoenzyme is formed, which can initiate transcription.

It is found in the plastid. The protein resides in the chloroplast. It carries out the reaction RNA(n) + a ribonucleoside 5'-triphosphate = RNA(n+1) + diphosphate. Functionally, DNA-dependent RNA polymerase catalyzes the transcription of DNA into RNA using the four ribonucleoside triphosphates as substrates. This chain is DNA-directed RNA polymerase subunit alpha, found in Festucopsis festucoides.